Consider the following 293-residue polypeptide: Ribosomal protein L11 methyltransferase (293 aa).

Positions 145, 166, 188, and 229 each coordinate S-adenosyl-L-methionine.

Belongs to the methyltransferase superfamily. PrmA family.

It localises to the cytoplasm. It catalyses the reaction L-lysyl-[protein] + 3 S-adenosyl-L-methionine = N(6),N(6),N(6)-trimethyl-L-lysyl-[protein] + 3 S-adenosyl-L-homocysteine + 3 H(+). Methylates ribosomal protein L11. The protein is Ribosomal protein L11 methyltransferase of Idiomarina loihiensis (strain ATCC BAA-735 / DSM 15497 / L2-TR).